We begin with the raw amino-acid sequence, 433 residues long: 23S rRNA (uracil(1939)-C(5))-methyltransferase RlmD (433 aa).

Residues 1–53 (MPVAVIESLDHEGRGVAHVDGKVVFVEGALAGEQVEYTVYRQRPSYDLAEATR) enclose the TRAM domain. Positions 66, 72, 75, and 154 each coordinate [4Fe-4S] cluster. S-adenosyl-L-methionine-binding residues include Gln-263, Phe-292, Asn-297, Glu-313, Asn-341, and Asp-362. Residue Cys-389 is the Nucleophile of the active site.

The protein belongs to the class I-like SAM-binding methyltransferase superfamily. RNA M5U methyltransferase family. RlmD subfamily.

It carries out the reaction uridine(1939) in 23S rRNA + S-adenosyl-L-methionine = 5-methyluridine(1939) in 23S rRNA + S-adenosyl-L-homocysteine + H(+). Functionally, catalyzes the formation of 5-methyl-uridine at position 1939 (m5U1939) in 23S rRNA. In Aromatoleum aromaticum (strain DSM 19018 / LMG 30748 / EbN1) (Azoarcus sp. (strain EbN1)), this protein is 23S rRNA (uracil(1939)-C(5))-methyltransferase RlmD.